Here is a 118-residue protein sequence, read N- to C-terminus: Large ribosomal subunit protein bL20 (118 aa).

The protein belongs to the bacterial ribosomal protein bL20 family.

Functionally, binds directly to 23S ribosomal RNA and is necessary for the in vitro assembly process of the 50S ribosomal subunit. It is not involved in the protein synthesizing functions of that subunit. The sequence is that of Large ribosomal subunit protein bL20 from Hahella chejuensis (strain KCTC 2396).